The sequence spans 522 residues: Putative thymidine phosphorylase (522 aa).

The protein belongs to the thymidine/pyrimidine-nucleoside phosphorylase family. Type 2 subfamily.

It carries out the reaction thymidine + phosphate = 2-deoxy-alpha-D-ribose 1-phosphate + thymine. In Albidiferax ferrireducens (strain ATCC BAA-621 / DSM 15236 / T118) (Rhodoferax ferrireducens), this protein is Putative thymidine phosphorylase.